Consider the following 418-residue polypeptide: Tyrosine--tRNA ligase (418 aa).

Residue Tyr-34 participates in L-tyrosine binding. Positions 39 to 48 (PTADSLHLGH) match the 'HIGH' region motif. Residues Tyr-169 and Gln-173 each contribute to the L-tyrosine site. Residues 229 to 233 (KFGKS) carry the 'KMSKS' region motif. An ATP-binding site is contributed by Lys-232. The 67-residue stretch at 352–418 (LNLVDMLVTA…GKKKYAVLTY (67 aa)) folds into the S4 RNA-binding domain.

This sequence belongs to the class-I aminoacyl-tRNA synthetase family. TyrS type 1 subfamily. As to quaternary structure, homodimer.

The protein localises to the cytoplasm. It catalyses the reaction tRNA(Tyr) + L-tyrosine + ATP = L-tyrosyl-tRNA(Tyr) + AMP + diphosphate + H(+). Catalyzes the attachment of tyrosine to tRNA(Tyr) in a two-step reaction: tyrosine is first activated by ATP to form Tyr-AMP and then transferred to the acceptor end of tRNA(Tyr). This Streptococcus pyogenes serotype M5 (strain Manfredo) protein is Tyrosine--tRNA ligase.